We begin with the raw amino-acid sequence, 395 residues long: F-box/kelch-repeat protein At4g39570 (395 aa).

Residues 1–25 are compositionally biased toward basic residues; that stretch reads MSSPERKRKRVTSTKNPSVKKKKKI. Residues 1–29 are disordered; it reads MSSPERKRKRVTSTKNPSVKKKKKISPVP. The F-box domain maps to 29-75; that stretch reads PTPIPSLPDDLLVSIFARVSRLYYPILSLVSKSFRSLLRSPELYETR. Kelch repeat units follow at residues 150 to 197 and 198 to 246; these read DIYF…VIDG and KIYV…RSAY.

This chain is F-box/kelch-repeat protein At4g39570, found in Arabidopsis thaliana (Mouse-ear cress).